A 246-amino-acid chain; its full sequence is Ribonuclease 3 (246 aa).

The region spanning 18-147 (FQELQKKIGI…FIGALYLDQG (130 aa)) is the RNase III domain. Residue E60 coordinates Mg(2+). D64 is a catalytic residue. D133 and E136 together coordinate Mg(2+). The active site involves E136. The DRBM domain maps to 173-242 (DFKSQLQELV…AQMALETLRA (70 aa)).

Belongs to the ribonuclease III family. Homodimer. It depends on Mg(2+) as a cofactor.

The protein localises to the cytoplasm. It catalyses the reaction Endonucleolytic cleavage to 5'-phosphomonoester.. Functionally, digests double-stranded RNA. Involved in the processing of primary rRNA transcript to yield the immediate precursors to the large and small rRNAs (23S and 16S). Processes some mRNAs, and tRNAs when they are encoded in the rRNA operon. Processes pre-crRNA and tracrRNA of type II CRISPR loci if present in the organism. This Geobacillus thermodenitrificans (strain NG80-2) protein is Ribonuclease 3.